The chain runs to 199 residues: Holliday junction branch migration complex subunit RuvA (199 aa).

The domain I stretch occupies residues 1 to 63; that stretch reads MIGCLIGEVF…EDAQQLYGFS (63 aa). The domain II stretch occupies residues 64 to 142; the sequence is DAQEKTIFRT…TLAQGTSSAA (79 aa). Residues 143 to 150 are flexible linker; that stretch reads ALPQIQFV. The interval 150-199 is domain III; sequence VSNSPVAEAEAALQSLGYKPLEAQKAVAAVKADYTESADIIRAALKSMMK.

This sequence belongs to the RuvA family. As to quaternary structure, homotetramer. Forms an RuvA(8)-RuvB(12)-Holliday junction (HJ) complex. HJ DNA is sandwiched between 2 RuvA tetramers; dsDNA enters through RuvA and exits via RuvB. An RuvB hexamer assembles on each DNA strand where it exits the tetramer. Each RuvB hexamer is contacted by two RuvA subunits (via domain III) on 2 adjacent RuvB subunits; this complex drives branch migration. In the full resolvosome a probable DNA-RuvA(4)-RuvB(12)-RuvC(2) complex forms which resolves the HJ.

The protein localises to the cytoplasm. In terms of biological role, the RuvA-RuvB-RuvC complex processes Holliday junction (HJ) DNA during genetic recombination and DNA repair, while the RuvA-RuvB complex plays an important role in the rescue of blocked DNA replication forks via replication fork reversal (RFR). RuvA specifically binds to HJ cruciform DNA, conferring on it an open structure. The RuvB hexamer acts as an ATP-dependent pump, pulling dsDNA into and through the RuvAB complex. HJ branch migration allows RuvC to scan DNA until it finds its consensus sequence, where it cleaves and resolves the cruciform DNA. In Acinetobacter baumannii (strain ACICU), this protein is Holliday junction branch migration complex subunit RuvA.